The sequence spans 694 residues: Putative serine/threonine-protein kinase R679 (694 aa).

Positions Ile167–Thr548 constitute a Protein kinase domain. ATP contacts are provided by residues Val173–Ala181 and Lys196. Residue Asp395 is the Proton acceptor of the active site.

This sequence belongs to the protein kinase superfamily. Ser/Thr protein kinase family.

It localises to the virion. The catalysed reaction is L-seryl-[protein] + ATP = O-phospho-L-seryl-[protein] + ADP + H(+). It carries out the reaction L-threonyl-[protein] + ATP = O-phospho-L-threonyl-[protein] + ADP + H(+). This Acanthamoeba polyphaga (Amoeba) protein is Putative serine/threonine-protein kinase R679.